We begin with the raw amino-acid sequence, 190 residues long: Putative 3-methyladenine DNA glycosylase (190 aa).

The protein belongs to the DNA glycosylase MPG family.

This Chlamydia abortus (strain DSM 27085 / S26/3) (Chlamydophila abortus) protein is Putative 3-methyladenine DNA glycosylase.